Here is a 136-residue protein sequence, read N- to C-terminus: Large ribosomal subunit protein bL21 (136 aa).

This sequence belongs to the bacterial ribosomal protein bL21 family. As to quaternary structure, part of the 50S ribosomal subunit. Contacts protein L20.

This protein binds to 23S rRNA in the presence of protein L20. The protein is Large ribosomal subunit protein bL21 of Trichodesmium erythraeum (strain IMS101).